The primary structure comprises 357 residues: UPF0744 protein C106.03 (357 aa).

Serine 282 is modified (phosphoserine).

Belongs to the UPF0744 family.

It is found in the cytoplasm. This chain is UPF0744 protein C106.03, found in Schizosaccharomyces pombe (strain 972 / ATCC 24843) (Fission yeast).